The sequence spans 329 residues: Nicotianamine synthase 8 (329 aa).

Belongs to the nicotianamine synthase (NAS)-like family. In terms of assembly, homotrimer.

It catalyses the reaction 3 S-adenosyl-L-methionine = nicotianamine + 3 S-methyl-5'-thioadenosine + 3 H(+). Functionally, synthesizes nicotianamine, a polyamine that is the first intermediate in the synthesis of the phytosiderophores of the mugineic acid type found in gramineae which serve as a sensor for the physiological iron status within the plant, and/or might be involved in the transport of iron. The protein is Nicotianamine synthase 8 (NAS8) of Hordeum vulgare (Barley).